We begin with the raw amino-acid sequence, 1087 residues long: Alpha-mannosidase G (1087 aa).

The Zn(2+) site is built by histidine 264, aspartate 266, aspartate 376, and histidine 579. Catalysis depends on aspartate 376, which acts as the Nucleophile.

This sequence belongs to the glycosyl hydrolase 38 family. Requires Zn(2+) as cofactor.

The enzyme catalyses Hydrolysis of terminal, non-reducing alpha-D-mannose residues in alpha-D-mannosides.. The chain is Alpha-mannosidase G (manG) from Dictyostelium discoideum (Social amoeba).